The primary structure comprises 257 residues: Chymotrypsin-like elastase family member 3B (257 aa).

A signal peptide (or 3) is located at residues 1-2 (VA). Residues 3–15 (SGYGPPSSHPSSR) constitute a propeptide, activation peptide. In terms of domain architecture, Peptidase S1 spans 16-255 (VVNGEDAVPY…FIDWIEETIA (240 aa)). Asn38 carries an N-linked (GlcNAc...) asparagine glycan. Disulfide bonds link Cys45-Cys61 and Cys104-Cys107. His60 serves as the catalytic Charge relay system. The active-site Charge relay system is the Asp110. Cystine bridges form between Cys144/Cys210, Cys175/Cys191, and Cys200/Cys231. Ser204 serves as the catalytic Charge relay system.

This sequence belongs to the peptidase S1 family. Elastase subfamily.

The catalysed reaction is Preferential cleavage: Ala-|-Xaa. Does not hydrolyze elastin.. In terms of biological role, efficient protease with alanine specificity but only little elastolytic activity. This chain is Chymotrypsin-like elastase family member 3B (CELA3B), found in Macaca mulatta (Rhesus macaque).